Consider the following 327-residue polypeptide: Phenylalanine--tRNA ligase alpha subunit (327 aa).

E252 provides a ligand contact to Mg(2+).

It belongs to the class-II aminoacyl-tRNA synthetase family. Phe-tRNA synthetase alpha subunit type 1 subfamily. Tetramer of two alpha and two beta subunits. Mg(2+) serves as cofactor.

The protein localises to the cytoplasm. The enzyme catalyses tRNA(Phe) + L-phenylalanine + ATP = L-phenylalanyl-tRNA(Phe) + AMP + diphosphate + H(+). In Tolumonas auensis (strain DSM 9187 / NBRC 110442 / TA 4), this protein is Phenylalanine--tRNA ligase alpha subunit.